The chain runs to 70 residues: Basic phospholipase A2 2 (70 aa).

Cys28 and Cys44 are oxidised to a cystine. Residue His47 is part of the active site. Asp48 serves as a coordination point for Ca(2+).

This sequence belongs to the phospholipase A2 family. Group II subfamily. D49 sub-subfamily. Requires Ca(2+) as cofactor. As to expression, expressed by the venom gland.

Its subcellular location is the secreted. The catalysed reaction is a 1,2-diacyl-sn-glycero-3-phosphocholine + H2O = a 1-acyl-sn-glycero-3-phosphocholine + a fatty acid + H(+). Its function is as follows. Snake venom phospholipase A2 (PLA2) that exhibits strong myotoxicity. PLA2 catalyzes the calcium-dependent hydrolysis of the 2-acyl groups in 3-sn-phosphoglycerides. This chain is Basic phospholipase A2 2, found in Trimeresurus stejnegeri (Chinese green tree viper).